A 642-amino-acid polypeptide reads, in one-letter code: MKVTFMNLEERKKLETKSIDELDLIGKKVCVDTCVVIDGRITELIERGKLKDATIIIPEAVVSELEYQANMGREIGYKGIEELRKLIEKASEHNIKVEYYGERPTREEIFLAKSGEIDAMIRKVAKETNSILLTSDWIQYNLAKAQGIEAYFLEAAEEEVELVLDKYFDEETMSVHLKEGCLPYAKKGKPGEVKLVPIGDKELTKEEMEDIIDNIIKYAEQNNGFFEIQRKGATVIQLGNIRISIARPPFSEALEVTAVRPVVKASLEDYELSDKLMERLKERAEGIFVSGPPGSGKSTFVAALAEFYRSQGKIVKTMESPRDLQVSKEITQYAPLEGDMEKTCDILLLVRPDYTIYDEVRKTRDFEIFADMRMAGVGMVGVVHASKPIDAIQRLIGRVELGVIPQVVDTVIFIKDGKIQKVYEIDFTVKVPYGMVEEDLARPVIEVKDFETGRVEYEIYTYGEQVVVMPIKEEGGKKAPIYGYAEEKLEEILKKLLPRKAKPMVKVTGDNSIDLIVPEKYIGAIIGKGGKEISKLEDMLGLKISVKEKEKEEEKDMERIYRKYEYVNELESTRIYETDKYVVVDVGEDFAGENIRIYIDGKLLTTVTVRNDGTVRINKKTKVGKEILEAIDEGRDIYVDLQ.

Positions 15 and 118 each coordinate Mg(2+). One can recognise a PINc domain in the interval 29–149 (VCVDTCVVID…YNLAKAQGIE (121 aa)). Residues 510–578 (DNSIDLIVPE…ELESTRIYET (69 aa)) form the KH domain.

This sequence in the N-terminal section; belongs to the PINc/VapC protein family. Mg(2+) is required as a cofactor.

This is an uncharacterized protein from Methanocaldococcus jannaschii (strain ATCC 43067 / DSM 2661 / JAL-1 / JCM 10045 / NBRC 100440) (Methanococcus jannaschii).